The primary structure comprises 205 residues: GTP cyclohydrolase-2 (205 aa).

49-53 (RIHSE) lines the GTP pocket. Zn(2+) contacts are provided by Cys-54, Cys-65, and Cys-67. Residues Gln-70, 92–94 (EGR), and Thr-114 each bind GTP. Asp-126 serves as the catalytic Proton acceptor. Arg-128 functions as the Nucleophile in the catalytic mechanism. 2 residues coordinate GTP: Thr-149 and Lys-154.

The protein belongs to the GTP cyclohydrolase II family. Zn(2+) serves as cofactor.

The catalysed reaction is GTP + 4 H2O = 2,5-diamino-6-hydroxy-4-(5-phosphoribosylamino)-pyrimidine + formate + 2 phosphate + 3 H(+). It functions in the pathway cofactor biosynthesis; riboflavin biosynthesis; 5-amino-6-(D-ribitylamino)uracil from GTP: step 1/4. Its function is as follows. Catalyzes the conversion of GTP to 2,5-diamino-6-ribosylamino-4(3H)-pyrimidinone 5'-phosphate (DARP), formate and pyrophosphate. The sequence is that of GTP cyclohydrolase-2 from Shewanella denitrificans (strain OS217 / ATCC BAA-1090 / DSM 15013).